Reading from the N-terminus, the 205-residue chain is Large ribosomal subunit protein uL4 (205 aa).

The tract at residues 43–97 is disordered; the sequence is GKRQGTSKVKNRSAVRGGGKKPWRQKGTGRARQGSIRAPQWRGGGTVFGPTPRSY. A compositionally biased stretch (basic residues) spans 51-71; sequence VKNRSAVRGGGKKPWRQKGTG.

This sequence belongs to the universal ribosomal protein uL4 family. In terms of assembly, part of the 50S ribosomal subunit.

Its function is as follows. One of the primary rRNA binding proteins, this protein initially binds near the 5'-end of the 23S rRNA. It is important during the early stages of 50S assembly. It makes multiple contacts with different domains of the 23S rRNA in the assembled 50S subunit and ribosome. In terms of biological role, forms part of the polypeptide exit tunnel. The sequence is that of Large ribosomal subunit protein uL4 from Lactobacillus acidophilus (strain ATCC 700396 / NCK56 / N2 / NCFM).